Reading from the N-terminus, the 170-residue chain is Sec-independent protein translocase protein TatB (170 aa).

A helical transmembrane segment spans residues 1–21 (MIDFGFDKIALIGAVALIVIG). Residues 69–170 (AARNVEQSVS…VARFRPPRPL (102 aa)) are disordered. Over residues 73–93 (VEQSVSSEVNRTSSEMNQAWE) the composition is skewed to polar residues. Over residues 128-137 (HPRKNWRLKR) the composition is skewed to basic residues.

It belongs to the TatB family. In terms of assembly, the Tat system comprises two distinct complexes: a TatABC complex, containing multiple copies of TatA, TatB and TatC subunits, and a separate TatA complex, containing only TatA subunits. Substrates initially bind to the TatABC complex, which probably triggers association of the separate TatA complex to form the active translocon.

It localises to the cell inner membrane. In terms of biological role, part of the twin-arginine translocation (Tat) system that transports large folded proteins containing a characteristic twin-arginine motif in their signal peptide across membranes. Together with TatC, TatB is part of a receptor directly interacting with Tat signal peptides. TatB may form an oligomeric binding site that transiently accommodates folded Tat precursor proteins before their translocation. In Methylibium petroleiphilum (strain ATCC BAA-1232 / LMG 22953 / PM1), this protein is Sec-independent protein translocase protein TatB.